A 376-amino-acid polypeptide reads, in one-letter code: Erythronate-4-phosphate dehydrogenase (376 aa).

Positions 45 and 67 each coordinate substrate. NAD(+) is bound by residues Asp147, 209-211, and Asp235; that span reads ASR. Arg211 is a catalytic residue. Glu240 is an active-site residue. Residue His257 is the Proton donor of the active site. Position 260 (Gly260) interacts with NAD(+). Residue Tyr261 participates in substrate binding.

Belongs to the D-isomer specific 2-hydroxyacid dehydrogenase family. PdxB subfamily. Homodimer.

The protein localises to the cytoplasm. The catalysed reaction is 4-phospho-D-erythronate + NAD(+) = (R)-3-hydroxy-2-oxo-4-phosphooxybutanoate + NADH + H(+). The protein operates within cofactor biosynthesis; pyridoxine 5'-phosphate biosynthesis; pyridoxine 5'-phosphate from D-erythrose 4-phosphate: step 2/5. Catalyzes the oxidation of erythronate-4-phosphate to 3-hydroxy-2-oxo-4-phosphonooxybutanoate. This is Erythronate-4-phosphate dehydrogenase from Aeromonas hydrophila subsp. hydrophila (strain ATCC 7966 / DSM 30187 / BCRC 13018 / CCUG 14551 / JCM 1027 / KCTC 2358 / NCIMB 9240 / NCTC 8049).